The following is a 318-amino-acid chain: Transaldolase (318 aa).

Lys132 serves as the catalytic Schiff-base intermediate with substrate.

It belongs to the transaldolase family. Type 1 subfamily. Homodimer.

The protein localises to the cytoplasm. The enzyme catalyses D-sedoheptulose 7-phosphate + D-glyceraldehyde 3-phosphate = D-erythrose 4-phosphate + beta-D-fructose 6-phosphate. The protein operates within carbohydrate degradation; pentose phosphate pathway; D-glyceraldehyde 3-phosphate and beta-D-fructose 6-phosphate from D-ribose 5-phosphate and D-xylulose 5-phosphate (non-oxidative stage): step 2/3. Its function is as follows. Transaldolase is important for the balance of metabolites in the pentose-phosphate pathway. The polypeptide is Transaldolase (Shewanella oneidensis (strain ATCC 700550 / JCM 31522 / CIP 106686 / LMG 19005 / NCIMB 14063 / MR-1)).